The following is a 450-amino-acid chain: L-galactonate dehydratase (450 aa).

Residue Lys221 is part of the active site. Mg(2+)-binding residues include Asp251, Glu277, and Glu306. His356 is a catalytic residue.

This sequence belongs to the mandelate racemase/muconate lactonizing enzyme family. The cofactor is Mg(2+).

It carries out the reaction L-galactonate = 2-dehydro-3-deoxy-L-galactonate + H2O. The protein operates within carbohydrate acid metabolism. In terms of biological role, mediates the conversion of L-galactonate to 2-dehydro-3-deoxy-L-galactonate, the second step in D-galacturonate catabolic process. The polypeptide is L-galactonate dehydratase (lgd1) (Hypocrea jecorina (Trichoderma reesei)).